An 866-amino-acid polypeptide reads, in one-letter code: MGFIYARKLLLCMAVSIYAIGSTTTTETTTSSSSTSGSGQSTSSGTTNSSSSPTTSPPTTSSSPPTSTHTSSPSSTSTQSSSTAATSSSAPSTASSTTSIPTSTSTETTTTTPTASTTTPTTTTAAPTTAATTTAVTTAASTSAETTTATATATSTPTTTTPTSTTTTTATTTVPTTASTTTDTTTAATTTAATTTAATTTAATTTAATTTAATTTAATTTAATTTAATTTAATTTAATTSSATTAATTSSTTTAATTTAATTTAATTTAATTTAATTTAATTTAATTTAATTTAATTTAATTTAATTTAATTTAATTTAATTTAATTTGSPTSGSTSTTGASTSTPSASTATSATPTSTSTSAAATTSTPTPTSAATSAESTTEAPTSTPTTDTTTPSEATTATTSPESTTVSASTTSATTTAFTTESHTSPDSSTGSTSTAEPSSTFTLTPSTATPSTDQFTGSSASTESDSTDSSTVPTTGTESITESSSTTEASTNLGSSTYESTEALETPDGNTTSGNTTPSPSPRTPSFADTQQTPDNGVSTQHTTINDHTTANAQKHAGHHRGRAGGRRGSPQGGSHTTPHPDRLTPSPDDTYDDDTNHPNGRNNSIEIVPQLPPDRPIIELGVATLRKNFMEASCTVETNSGLAIFWKIGNASVDAFNRGTTHTRLMRNGVPVYALVSTLRVPWLNVIPLTKITCAACPTNLVAGDGVDLNSCTTKSTTIPCPGQQRTHIFFSAKGDRAVCITSELVSQPTITWSVGSDRLRNDGFSQTWYGIQPGVCGILRSEVRIHRTTWRFGSTSKDYLCEVSASDSKTSDYKVLPNAHSTSNFALVAATTLTVTILCLLCCLYCMLTRPRASVY.

A signal peptide spans methionine 1–threonine 25. Disordered stretches follow at residues threonine 24–threonine 185 and threonine 319–glutamine 619. The N-linked (GlcNAc...) asparagine; by host glycan is linked to asparagine 48. Residues threonine 319–threonine 442 are compositionally biased toward low complexity. Over residues alanine 443–phenylalanine 463 the composition is skewed to polar residues. Composition is skewed to low complexity over residues threonine 464–threonine 499 and threonine 514–proline 526. The N-linked (GlcNAc...) asparagine; by host glycan is linked to asparagine 518. The span at phenylalanine 535–alanine 561 shows a compositional bias: polar residues. The segment covering histidine 564–glycine 574 has biased composition (basic residues). 2 N-linked (GlcNAc...) asparagine; by host glycosylation sites follow: asparagine 611 and asparagine 659. A helical transmembrane segment spans residues phenylalanine 835–tyrosine 855.

It is found in the virion membrane. Functionally, virulence factor. The sequence is that of Glycoprotein gp2 from Equus caballus (Horse).